Reading from the N-terminus, the 270-residue chain is Putative serine acetyltransferase (270 aa).

This sequence belongs to the transferase hexapeptide repeat family.

The protein localises to the cytoplasm. The protein resides in the nucleus. It carries out the reaction L-serine + acetyl-CoA = O-acetyl-L-serine + CoA. It participates in amino-acid biosynthesis; L-cysteine biosynthesis; L-cysteine from L-serine: step 1/2. The sequence is that of Putative serine acetyltransferase from Schizosaccharomyces pombe (strain 972 / ATCC 24843) (Fission yeast).